The following is a 127-amino-acid chain: MPQSFTSIARIGDYILKSPVLSKLCVPVANQFINLAGYKKLGLKFDDLIAEENPIMQTALRRLPEDESYARAYRIIRAHQTELTHHLLPRNEWIKAQEDVPYLLPYILEAEAAAKEKDELDNIEVSK.

It belongs to the UQCRB/QCR7 family. As to quaternary structure, component of the ubiquinol-cytochrome c oxidoreductase (cytochrome b-c1 complex, complex III, CIII), a multisubunit enzyme composed of 10 subunits. The complex is composed of 3 respiratory subunits cytochrome b (COB), cytochrome c1 (CYT1) and Rieske protein (RIP1), 2 core protein subunits COR1 and QCR2, and 5 low-molecular weight protein subunits QCR6, QCR7, QCR8, QCR9 and QCR10. The complex exists as an obligatory dimer and forms supercomplexes (SCs) in the inner mitochondrial membrane with a monomer or a dimer of cytochrome c oxidase (complex IV, CIV), resulting in 2 different assemblies (supercomplexes III(2)IV and III(2)IV(2)).

Its subcellular location is the mitochondrion inner membrane. Functionally, component of the ubiquinol-cytochrome c oxidoreductase, a multisubunit transmembrane complex that is part of the mitochondrial electron transport chain which drives oxidative phosphorylation. The respiratory chain contains 3 multisubunit complexes succinate dehydrogenase (complex II, CII), ubiquinol-cytochrome c oxidoreductase (cytochrome b-c1 complex, complex III, CIII) and cytochrome c oxidase (complex IV, CIV), that cooperate to transfer electrons derived from NADH and succinate to molecular oxygen, creating an electrochemical gradient over the inner membrane that drives transmembrane transport and the ATP synthase. The cytochrome b-c1 complex catalyzes electron transfer from ubiquinol to cytochrome c, linking this redox reaction to translocation of protons across the mitochondrial inner membrane, with protons being carried across the membrane as hydrogens on the quinol. In the process called Q cycle, 2 protons are consumed from the matrix, 4 protons are released into the intermembrane space and 2 electrons are passed to cytochrome c. This chain is Cytochrome b-c1 complex subunit 7, mitochondrial (QCR7), found in Saccharomyces cerevisiae (strain ATCC 204508 / S288c) (Baker's yeast).